The primary structure comprises 217 residues: Pyridoxine/pyridoxamine 5'-phosphate oxidase (217 aa).

FMN contacts are provided by residues 66–71, 81–82, arginine 87, lysine 88, and glutamine 110; these read RMVLLK and FT. A substrate-binding site is contributed by lysine 71. The substrate site is built by tyrosine 128, arginine 132, and serine 136. FMN-binding positions include 145–146 and tryptophan 190; that span reads QS. Residue 196–198 coordinates substrate; that stretch reads RLH. FMN is bound at residue arginine 200.

This sequence belongs to the pyridoxamine 5'-phosphate oxidase family. In terms of assembly, homodimer. It depends on FMN as a cofactor.

It catalyses the reaction pyridoxamine 5'-phosphate + O2 + H2O = pyridoxal 5'-phosphate + H2O2 + NH4(+). It carries out the reaction pyridoxine 5'-phosphate + O2 = pyridoxal 5'-phosphate + H2O2. It functions in the pathway cofactor metabolism; pyridoxal 5'-phosphate salvage; pyridoxal 5'-phosphate from pyridoxamine 5'-phosphate: step 1/1. Its pathway is cofactor metabolism; pyridoxal 5'-phosphate salvage; pyridoxal 5'-phosphate from pyridoxine 5'-phosphate: step 1/1. Catalyzes the oxidation of either pyridoxine 5'-phosphate (PNP) or pyridoxamine 5'-phosphate (PMP) into pyridoxal 5'-phosphate (PLP). This is Pyridoxine/pyridoxamine 5'-phosphate oxidase from Colwellia psychrerythraea (strain 34H / ATCC BAA-681) (Vibrio psychroerythus).